The sequence spans 1588 residues: MLPPKHLSATKPKKSWAPNLYELDSDLTKEPDVIIGEGPTDSEFFHQRFRNLIYVEFVGPRKTLIKLRNLCLDWLQPETHTKEEIIELLVLEQYLTIIPEKLKPWVRAKKPENCEKLVTLLENYKEMYQPEDDNNSDVTSDDDMTRNRRESSPPHSVHSFSGDRDWDRRGRSRDMEPRDRWSHTRNPRSRMPQRDLSLPVVAKTSFEMDRDDDRDSRAYESRSQDAESYQNVVDLAEDRKPHNTIQDNMENYRKLLSLGVQLAEDDGHSHMTQGHSSRSKRSAYPSTSRGLKTMPEAKKSTHRRGICEDESSHGVIMEKFIKDVSRSSKSGRARESSDRSQRFPRMSDDNWKDISLNKRESVIQQRVYEGNAFRGGFRFNSTLVSRKRVLERKRRYHFDTDGKGSIHDQKACPRKKPFECGSEMRKAMSMSSLSSLSSPSFTESQPIDFGAMPYVCDECGRSFSVISEFVEHQIMHTRENLYEYGESFIHSVAVSEVQKSQVGGKRFECKDCGETFNKSAALAEHRKIHARGYLVECKNQECEEAFMPSPTFSELQKIYGKDKFYECRVCKETFLHSSALIEHQKIHFGDDKDNEREHERERERGETFRPSPALNEFQKMYGKEKMYECKVCGETFLHSSSLKEHQKIHTRGNPFENKGKVCEETFIPGQSLKKRQKTYNKEKLYDFTDGRDAFMQSSELSEHQKIHSRKNLFEGRGYEKSVIHSGPFTESQKSHTITRPLESDEDEKAFTISSNPYENQKIPTKENVYEAKSYERSVIHSLASVEAQKSHSVAGPSKPKVMAESTIQSFDAINHQRVRAGGNTSEGREYSRSVIHSLVASKPPRSHNGNELVESNEKGESSIYISDLNDKRQKIPARENPCEGGSKNRNYEDSVIQSVSRAKPQKSVPGEGSGEFKKDGEFSVPSSNVREYQKARAKKKYIEHRSNETSVIHSLPFGEQTFRPRGMLYECQECGECFAHSSDLTEHQKIHEREKPSGSRNYEWSVIRSLAPTDPQTSYAQEQYAKEQAWNKCKEFRQFFATSEDLNTNQKIYDQEKSHGEESQGENTDGEETHSEETHGQETIEDPVIQGSDMEDPQKDDPDDKIYECEDCGLGFVDLTDLTDHQKVHSRKCLVDSREYTHSVIHTHSISEYQRDYTGEQLYECPKCGESFIHSSFLFEHQRIHEQDQLYSMKGCDDGFIALLPMKPRRNRAAERNPALAGSAIRCLLCGQGFIHSSALNEHMRLHREDDLLEQSQMAEEAIIPGLALTEFQRSQTEERLFECAVCGESFINPAELADHVTVHKNEPYEYGSSYTHTSFLTEPLKGAIPFYECKDCGKSFIHSTVLTKHKELHLEEEEEDEAAAAAAAAAQEVEANVHVPQVVLRIQGSNVEAAEPEVEAAEPEVEAAEPEVEAAEPNGEAEGPDGEAAEPIGEAGQPNGEAEQPNGDADEPDGAGIEDPEERAEEPEGKAEEPEGDADEPDGVGIEDPEEGEDQEIQVEEPYYDCHECTETFTSSTAFGEHLKTHASMIIFEPANAFGECSGYIERASTSTGGANQADEKYFKCDVCGQLFNDRLSLARHQNTHTG.

In terms of domain architecture, SCAN box spans 46–128 (HQRFRNLIYV…TLLENYKEMY (83 aa)). Disordered regions lie at residues 128–230 (YQPE…ESYQ), 266–306 (DGHS…RRGI), and 319–349 (KFIK…MSDD). Positions 129 to 142 (QPEDDNNSDVTSDD) are enriched in acidic residues. Composition is skewed to basic and acidic residues over residues 143-152 (DMTRNRRESS), 161-182 (SGDR…DRWS), 206-225 (FEMD…RSQD), and 295-306 (PEAKKSTHRRGI). 3 C2H2-type zinc fingers span residues 454–476 (YVCD…QIMH), 507–529 (FECK…RKIH), and 565–587 (YECR…QKIH). Over residues 588–607 (FGDDKDNEREHERERERGET) the composition is skewed to basic and acidic residues. Positions 588–610 (FGDDKDNEREHERERERGETFRP) are disordered. The C2H2-type 4 zinc finger occupies 627-649 (YECKVCGETFLHSSSLKEHQKIH). Residues 838-930 (LVASKPPRSH…EFSVPSSNVR (93 aa)) are disordered. Residues 868–881 (LNDKRQKIPARENP) are compositionally biased toward basic and acidic residues. Residues 969-991 (YECQECGECFAHSSDLTEHQKIH) form a C2H2-type 5 zinc finger. The segment at 1056–1104 (EKSHGEESQGENTDGEETHSEETHGQETIEDPVIQGSDMEDPQKDDPDD) is disordered. Residues 1071–1082 (EETHSEETHGQE) are compositionally biased toward basic and acidic residues. 5 C2H2-type zinc fingers span residues 1107-1129 (YECE…QKVH), 1163-1185 (YECP…QRIH), 1225-1247 (IRCL…MRLH), 1282-1304 (FECA…VTVH), and 1332-1354 (YECK…KELH). Residues 1395-1415 (AEPEVEAAEPEVEAAEPEVEA) are compositionally biased toward acidic residues. The tract at residues 1395 to 1495 (AEPEVEAAEP…GIEDPEEGED (101 aa)) is disordered. 7 repeat units span residues 1397 to 1403 (PEVEAAE), 1404 to 1410 (PEVEAAE), 1411 to 1417 (PEVEAAE), 1418 to 1422 (PNGEA), 1425 to 1429 (PDGEA), 1432 to 1436 (PIGEA), and 1439 to 1443 (PNGEA). The 3 X 7 AA repeat of P-E-V-E-A-A-E stretch occupies residues 1397 to 1417 (PEVEAAEPEVEAAEPEVEAAE). The interval 1418-1443 (PNGEAEGPDGEAAEPIGEAGQPNGEA) is 4 X 5 AA repeat of P-X-G-E-A. 2 stretches are compositionally biased toward acidic residues: residues 1449-1466 (DADE…ERAE) and 1475-1495 (PEGD…EGED). 2 consecutive C2H2-type zinc fingers follow at residues 1505-1527 (YDCH…LKTH) and 1564-1586 (FKCD…QNTH).

This sequence belongs to the krueppel C2H2-type zinc-finger protein family. Homodimer. Interacts with SIAH1A and SIAH2. Interacts with TRAF2.

It localises to the nucleus. It is found in the cytoplasm. In terms of biological role, induces apoptosis in cooperation with SIAH1A. Acts as a mediator between p53/TP53 and BAX in a neuronal death pathway that is activated by DNA damage. Acts synergistically with TRAF2 and inhibits TNF induced apoptosis through activation of NF-kappa-B. The chain is Paternally-expressed gene 3 protein (PEG3) from Pan troglodytes (Chimpanzee).